The chain runs to 221 residues: HP1-HOAP-interacting protein (221 aa).

A disordered region spans residues 69 to 113 (NAKRHKMARETAASITDVSGSQSSSHQSAPSLHVSGQSSEFGASY). A compositionally biased stretch (low complexity) spans 86–103 (VSGSQSSSHQSAPSLHVS).

Component of the HipHop-HOAP telomere-capping complex, composed of at least HipHop and cav/HOAP, and may include Su(var)205/HP1; HipHop and cav/HOAP, but not Su(var)205, are interdependent for their protein stability. Interacts (via N-terminus) with cav/HOAP and Su(var)205/HP1. The HipHop-HOAP complex recruits the MTV complex, consisting of moi/modigliani, tea and ver/verrocchio, to telomeres to form the terminin telomere-capping complex.

It is found in the nucleus. The protein resides in the chromosome. The protein localises to the telomere. Functionally, part of the HipHop-HOAP complex that recruits the MTV complex to form the terminin telomere-capping complex, which binds to chromosome ends in a sequence-independent manner and prevents telomere fusion. This Drosophila melanogaster (Fruit fly) protein is HP1-HOAP-interacting protein.